We begin with the raw amino-acid sequence, 156 residues long: UPF0232 protein BL0636 (156 aa).

The protein belongs to the UPF0232 family.

This is UPF0232 protein BL0636 from Bifidobacterium longum (strain NCC 2705).